The following is a 476-amino-acid chain: Bifunctional protein HldE (476 aa).

The segment at 1–318 is ribokinase; it reads MLSKKPNILV…EYESSLHKSN (318 aa). 195–198 serves as a coordination point for ATP; the sequence is NKKE. Residue Asp-263 is part of the active site. The interval 345 to 476 is cytidylyltransferase; the sequence is FTNGCFDILH…RIQENEKCNN (132 aa).

The protein in the N-terminal section; belongs to the carbohydrate kinase PfkB family. In the C-terminal section; belongs to the cytidylyltransferase family. Homodimer.

It catalyses the reaction D-glycero-beta-D-manno-heptose 7-phosphate + ATP = D-glycero-beta-D-manno-heptose 1,7-bisphosphate + ADP + H(+). The catalysed reaction is D-glycero-beta-D-manno-heptose 1-phosphate + ATP + H(+) = ADP-D-glycero-beta-D-manno-heptose + diphosphate. It functions in the pathway nucleotide-sugar biosynthesis; ADP-L-glycero-beta-D-manno-heptose biosynthesis; ADP-L-glycero-beta-D-manno-heptose from D-glycero-beta-D-manno-heptose 7-phosphate: step 1/4. It participates in nucleotide-sugar biosynthesis; ADP-L-glycero-beta-D-manno-heptose biosynthesis; ADP-L-glycero-beta-D-manno-heptose from D-glycero-beta-D-manno-heptose 7-phosphate: step 3/4. Its function is as follows. Catalyzes the phosphorylation of D-glycero-D-manno-heptose 7-phosphate at the C-1 position to selectively form D-glycero-beta-D-manno-heptose-1,7-bisphosphate. Functionally, catalyzes the ADP transfer from ATP to D-glycero-beta-D-manno-heptose 1-phosphate, yielding ADP-D-glycero-beta-D-manno-heptose. This is Bifunctional protein HldE from Aliarcobacter butzleri (strain RM4018) (Arcobacter butzleri).